The primary structure comprises 235 residues: Carboxy-S-adenosyl-L-methionine synthase (235 aa).

Residues Tyr-35, Gly-60 to Ser-62, Asp-84 to Asn-85, Asp-110 to Ile-111, Asn-125, and Arg-192 contribute to the S-adenosyl-L-methionine site.

The protein belongs to the class I-like SAM-binding methyltransferase superfamily. Cx-SAM synthase family. Homodimer.

The enzyme catalyses prephenate + S-adenosyl-L-methionine = carboxy-S-adenosyl-L-methionine + 3-phenylpyruvate + H2O. Its function is as follows. Catalyzes the conversion of S-adenosyl-L-methionine (SAM) to carboxy-S-adenosyl-L-methionine (Cx-SAM). This is Carboxy-S-adenosyl-L-methionine synthase from Sulfurimonas denitrificans (strain ATCC 33889 / DSM 1251) (Thiomicrospira denitrificans (strain ATCC 33889 / DSM 1251)).